The primary structure comprises 448 residues: FAD-dependent monooxygenase srdH (448 aa).

Residues Glu-32 and Arg-107 each contribute to the FAD site. Gln-227 is a catalytic residue. Asp-313 provides a ligand contact to FAD.

It belongs to the paxM FAD-dependent monooxygenase family. The cofactor is FAD.

Highly reducing polyketide synthase; part of the gene cluster that mediates the biosynthesis of sordarial, a salicylic aldehyde structurally related to the phytotoxin pyriculol. The most interesting aspect of this pathway is formation of an aromatic product from the highly reducing polyketide synthase srdA. SrdA synthesizes a reduced polyketide chain from one molecule of acetyl-CoA and five molecules of malonyl-CoA. The polyketide chain is then reductively released as an aldehyde. The oxidoreductases srdC, srdD and srdE then oxidize one of the hydroxy groups to facilitate the intramolecular aldol condensation, followed by dehydration to yield a salicylic aldehyde. This aldehyde can undergo facile reduction by endogenous reductases to yield the alcohol 1-hydroxy-2-hydroxymethyl-3-pent-1,3-dienylbenzene. The flavin-dependent srdI counteract against the propensity of the aldehydes to be reduced under physiological conditions and is responsible for reoxidizing 1-hydroxy-2-hydroxymethyl-3-pent-1,3-dienylbenzene back to the salicylic aldehyde. This salicylic aldehyde is then selectively epoxidized by the cupin-domain-containing oxidoreductase srdB to yield the epoxide, which can be hydrolyzed stereoselectively by the hydrolase srdG to give the final product sordarial. The protein is FAD-dependent monooxygenase srdH of Neurospora crassa (strain ATCC 24698 / 74-OR23-1A / CBS 708.71 / DSM 1257 / FGSC 987).